Consider the following 338-residue polypeptide: Glycerol-3-phosphate dehydrogenase [NAD(P)+] (338 aa).

NADPH contacts are provided by Trp-14, Tyr-50, and Lys-110. Residues Lys-110, Gly-141, and Ser-143 each coordinate sn-glycerol 3-phosphate. Position 145 (Ala-145) interacts with NADPH. 5 residues coordinate sn-glycerol 3-phosphate: Lys-196, Asp-249, Ser-259, Arg-260, and Asn-261. Residue Lys-196 is the Proton acceptor of the active site. Residue Arg-260 coordinates NADPH. Glu-285 serves as a coordination point for NADPH.

Belongs to the NAD-dependent glycerol-3-phosphate dehydrogenase family.

Its subcellular location is the cytoplasm. It catalyses the reaction sn-glycerol 3-phosphate + NAD(+) = dihydroxyacetone phosphate + NADH + H(+). The catalysed reaction is sn-glycerol 3-phosphate + NADP(+) = dihydroxyacetone phosphate + NADPH + H(+). Its pathway is membrane lipid metabolism; glycerophospholipid metabolism. Catalyzes the reduction of the glycolytic intermediate dihydroxyacetone phosphate (DHAP) to sn-glycerol 3-phosphate (G3P), the key precursor for phospholipid synthesis. The sequence is that of Glycerol-3-phosphate dehydrogenase [NAD(P)+] from Malacoplasma penetrans (strain HF-2) (Mycoplasma penetrans).